A 333-amino-acid chain; its full sequence is Fructose-1,6-bisphosphatase class 1 (333 aa).

4 residues coordinate Mg(2+): glutamate 92, aspartate 113, leucine 115, and aspartate 116. Substrate-binding positions include aspartate 116–serine 119, asparagine 209, tyrosine 242, and lysine 272. Position 278 (glutamate 278) interacts with Mg(2+).

It belongs to the FBPase class 1 family. As to quaternary structure, homotetramer. Mg(2+) serves as cofactor.

Its subcellular location is the cytoplasm. The enzyme catalyses beta-D-fructose 1,6-bisphosphate + H2O = beta-D-fructose 6-phosphate + phosphate. The protein operates within carbohydrate biosynthesis; Calvin cycle. The polypeptide is Fructose-1,6-bisphosphatase class 1 (Pelodictyon phaeoclathratiforme (strain DSM 5477 / BU-1)).